Reading from the N-terminus, the 468-residue chain is ERO1-like protein alpha (468 aa).

A signal peptide spans Met-1–Gly-23. Intrachain disulfides connect Cys-35–Cys-48, Cys-37–Cys-46, Cys-85–Cys-391, Cys-94–Cys-99, Cys-94–Cys-131, Cys-99–Cys-104, Cys-208–Cys-241, and Cys-394–Cys-397. Ser-106, Ser-143, and Ser-145 each carry phosphoserine. FAD-binding residues include Arg-187, Thr-189, and Trp-200. Residues Ser-252 and His-255 each coordinate FAD. Asn-280 carries N-linked (GlcNAc...) asparagine glycosylation. FAD contacts are provided by Arg-287 and Arg-300. An N-linked (GlcNAc...) asparagine glycan is attached at Asn-384.

The protein belongs to the EROs family. Predominantly monomer. May function both as a monomer and a homodimer. Interacts with PDILT. Interacts with ERP44; the interaction results in retention of ERO1A in the endoplasmic reticulum. FAD is required as a cofactor. The Cys-94/Cys-99 and Cys-394/Cys-397 disulfide bonds constitute the redox-active center. The Cys-94/Cys-99 disulfide bond may accept electron from P4HB and funnel them to the active site disulfide Cys-394/Cys-397. The regulatory Cys-99/Cys-104 disulfide bond stabilizes the other regulatory bond Cys-94/Cys-131. Post-translationally, phosphorylated on Ser-145 by FAM20C in the Golgi which increases its enzymatic activity. Phosphorylation is induced by lactation. It is also induced by hypoxia and reductive stress.

It localises to the endoplasmic reticulum membrane. The protein localises to the golgi apparatus lumen. Its subcellular location is the secreted. It is found in the cell projection. The protein resides in the dendrite. Enzyme activity is tightly regulated to prevent the accumulation of reactive oxygen species in the endoplasmic reticulum. Reversibly down-regulated by the formation of disulfide bonds between the active site Cys-94 and Cys-131, and between Cys-99 and Cys-104. Glutathione may be required to regulate its activity in the endoplasmic reticulum. Oxidoreductase involved in disulfide bond formation in the endoplasmic reticulum. Efficiently reoxidizes P4HB/PDI, the enzyme catalyzing protein disulfide formation, in order to allow P4HB to sustain additional rounds of disulfide formation. Following P4HB reoxidation, passes its electrons to molecular oxygen via FAD, leading to the production of reactive oxygen species (ROS) in the cell. Required for the proper folding of immunoglobulins. Plays an important role in ER stress-induced, CHOP-dependent apoptosis by activating the inositol 1,4,5-trisphosphate receptor IP3R1. This Sus scrofa (Pig) protein is ERO1-like protein alpha.